A 98-amino-acid chain; its full sequence is Small ribosomal subunit protein bS20 (98 aa).

The span at 1-15 (MAPKKTTKKGGPKKR) shows a compositional bias: basic residues. The disordered stretch occupies residues 1 to 21 (MAPKKTTKKGGPKKRPSAEKR).

The protein belongs to the bacterial ribosomal protein bS20 family.

Functionally, binds directly to 16S ribosomal RNA. The protein is Small ribosomal subunit protein bS20 of Chlamydia felis (strain Fe/C-56) (Chlamydophila felis).